A 129-amino-acid chain; its full sequence is Ribonuclease P protein component (129 aa).

It belongs to the RnpA family. As to quaternary structure, consists of a catalytic RNA component (M1 or rnpB) and a protein subunit.

It catalyses the reaction Endonucleolytic cleavage of RNA, removing 5'-extranucleotides from tRNA precursor.. RNaseP catalyzes the removal of the 5'-leader sequence from pre-tRNA to produce the mature 5'-terminus. It can also cleave other RNA substrates such as 4.5S RNA. The protein component plays an auxiliary but essential role in vivo by binding to the 5'-leader sequence and broadening the substrate specificity of the ribozyme. The chain is Ribonuclease P protein component from Corynebacterium jeikeium (strain K411).